Here is a 101-residue protein sequence, read N- to C-terminus: Large ribosomal subunit protein bL21 (101 aa).

Belongs to the bacterial ribosomal protein bL21 family. In terms of assembly, part of the 50S ribosomal subunit. Contacts protein L20.

Functionally, this protein binds to 23S rRNA in the presence of protein L20. In Micrococcus luteus (strain ATCC 4698 / DSM 20030 / JCM 1464 / CCM 169 / CCUG 5858 / IAM 1056 / NBRC 3333 / NCIMB 9278 / NCTC 2665 / VKM Ac-2230) (Micrococcus lysodeikticus), this protein is Large ribosomal subunit protein bL21.